Consider the following 259-residue polypeptide: Leucine-rich repeat-containing protein 3B (259 aa).

A signal peptide spans 1 to 33; that stretch reads MNLVDLWLTRSLSMCLLLQSFVLMILCFHSASM. The LRRNT domain occupies 34–64; the sequence is CPKGCLCSSSGGLNVTCSNANLKEIPRDLPP. An N-linked (GlcNAc...) asparagine glycan is attached at Asn-47. 3 LRR repeats span residues 65–86, 89–110, and 114–135; these read ETVL…IFKD, QLRV…AFKG, and TLQT…AFNN. Asn-94 is a glycosylation site (N-linked (GlcNAc...) asparagine). One can recognise an LRRCT domain in the interval 145–197; that stretch reads NPWHCDCTLQQVLRSMVSNHETAHNVICKTSVLDEHAGRPFLNAANDADLCNL. Residues 205 to 225 traverse the membrane as a helical segment; the sequence is AMLVTMFGWFTMVISYVVYYV.

The protein belongs to the LRRC3 family.

It localises to the membrane. This is Leucine-rich repeat-containing protein 3B (LRRC3B) from Bos taurus (Bovine).